The sequence spans 331 residues: 3-dehydroquinate synthase homolog (331 aa).

It belongs to the archaeal-type DHQ synthase family.

This chain is 3-dehydroquinate synthase homolog, found in Persephonella marina (strain DSM 14350 / EX-H1).